A 269-amino-acid chain; its full sequence is Regulatory protein RecX (269 aa).

This sequence belongs to the RecX family.

It is found in the cytoplasm. Modulates RecA activity. This chain is Regulatory protein RecX, found in Listeria monocytogenes serotype 4b (strain CLIP80459).